Here is a 269-residue protein sequence, read N- to C-terminus: Cytochrome c oxidase subunit 3 (269 aa).

A run of 7 helical transmembrane segments spans residues 21–41 (PWPI…ALTM), 45–65 (IGHM…ATLW), 90–110 (GFLL…WAYF), 138–160 (PLLN…HGLV), 167–187 (ALSG…CQYI), 205–225 (FYAG…MLGI), and 247–267 (VLYC…FYWW).

Belongs to the cytochrome c oxidase subunit 3 family. As to quaternary structure, component of the cytochrome c oxidase (complex IV, CIV), a multisubunit enzyme composed of a catalytic core of 3 subunits and several supernumerary subunits. The complex exists as a monomer or a dimer and forms supercomplexes (SCs) in the inner mitochondrial membrane with ubiquinol-cytochrome c oxidoreductase (cytochrome b-c1 complex, complex III, CIII).

The protein resides in the mitochondrion inner membrane. It catalyses the reaction 4 Fe(II)-[cytochrome c] + O2 + 8 H(+)(in) = 4 Fe(III)-[cytochrome c] + 2 H2O + 4 H(+)(out). Component of the cytochrome c oxidase, the last enzyme in the mitochondrial electron transport chain which drives oxidative phosphorylation. The respiratory chain contains 3 multisubunit complexes succinate dehydrogenase (complex II, CII), ubiquinol-cytochrome c oxidoreductase (cytochrome b-c1 complex, complex III, CIII) and cytochrome c oxidase (complex IV, CIV), that cooperate to transfer electrons derived from NADH and succinate to molecular oxygen, creating an electrochemical gradient over the inner membrane that drives transmembrane transport and the ATP synthase. Cytochrome c oxidase is the component of the respiratory chain that catalyzes the reduction of oxygen to water. Electrons originating from reduced cytochrome c in the intermembrane space (IMS) are transferred via the dinuclear copper A center (CU(A)) of subunit 2 and heme A of subunit 1 to the active site in subunit 1, a binuclear center (BNC) formed by heme A3 and copper B (CU(B)). The BNC reduces molecular oxygen to 2 water molecules using 4 electrons from cytochrome c in the IMS and 4 protons from the mitochondrial matrix. This is Cytochrome c oxidase subunit 3 (COX3) from Kluyveromyces lactis (strain ATCC 8585 / CBS 2359 / DSM 70799 / NBRC 1267 / NRRL Y-1140 / WM37) (Yeast).